A 349-amino-acid chain; its full sequence is Hepatic sodium/bile acid cotransporter (349 aa).

Residues 1–22 (MEAHNASAPFNFTLPPNFGKRP) lie on the Extracellular side of the membrane. N-linked (GlcNAc...) asparagine glycans are attached at residues N5 and N11. The helical transmembrane segment at 23–44 (TDLALSVILVFMLFFIMLSLGC) threads the bilayer. Residues 45–47 (TME) lie on the Cytoplasmic side of the membrane. A helical transmembrane segment spans residues 48–83 (FSKIKAHLWKPKGLAIALVAQYGIMPLTAFVLGKVF). Over 84–86 (RLK) the chain is Extracellular. A discontinuously helical transmembrane segment spans residues 87–112 (NIEALAILVCGCSPGGNLSNVFSLAM). At 113–115 (KGD) the chain is on the cytoplasmic side. A helical transmembrane segment spans residues 116-142 (MNLSIVMTTCSTFCALGMMPLLLYIYS). Topologically, residues 143 to 156 (RGIYDGDLKDKVPY) are extracellular. A helical membrane pass occupies residues 157 to 179 (KGIVISLVLVLIPCTIGIVLKSK). The Cytoplasmic segment spans residues 180-183 (RPQY). The chain crosses the membrane as a helical span at residues 184–217 (MRYVIKGGMIIILLCSVAVTVLSAINVGKSIMFA). Over 218 to 219 (MT) the chain is Extracellular. The helical transmembrane segment at 220–243 (PLLIATSSLMPFIGFLLGYVLSAL) threads the bilayer. The Cytoplasmic portion of the chain corresponds to 244–247 (FCLN). The discontinuously helical transmembrane segment at 248 to 273 (GRCRRTVSMETGCQNVQLCSTILNVA) threads the bilayer. Residues 274–280 (FPPEVIG) are Extracellular-facing. The helical transmembrane segment at 281-311 (PLFFFPLLYMIFQLGEGLLLIAIFWCYEKFK) threads the bilayer. The Cytoplasmic segment spans residues 312-349 (TPKDKTKMIYTAATTEETIPGALGNGTYKGEDCSPCTA).

Belongs to the bile acid:sodium symporter (BASS) (TC 2.A.28) family. As to quaternary structure, (Microbial infection) Interacts with the myristoylated pre-S1 domain of hepatitis B virus large envelope protein; myristoylation is essential for this interaction. Expressed in liver. Expressed in placental trophoblasts.

The protein localises to the cell membrane. The enzyme catalyses taurocholate(out) + 2 Na(+)(out) = taurocholate(in) + 2 Na(+)(in). It carries out the reaction cholate(out) + 2 Na(+)(out) = cholate(in) + 2 Na(+)(in). It catalyses the reaction estrone 3-sulfate(out) + 2 Na(+)(out) = estrone 3-sulfate(in) + 2 Na(+)(in). The catalysed reaction is taurochenodeoxycholate(out) + 2 Na(+)(out) = taurochenodeoxycholate(in) + 2 Na(+)(in). The enzyme catalyses tauroursodeoxycholate(out) + 2 Na(+)(out) = tauroursodeoxycholate(in) + 2 Na(+)(in). It carries out the reaction glycocholate(out) + 2 Na(+)(out) = glycocholate(in) + 2 Na(+)(in). It catalyses the reaction tauronorcholate(out) + 2 Na(+)(out) = tauronorcholate(in) + 2 Na(+)(in). The catalysed reaction is taurodeoxycholate(out) + 2 Na(+)(out) = taurodeoxycholate(in) + 2 Na(+)(in). The enzyme catalyses tauroallocholate(out) + 2 Na(+)(out) = tauroallocholate(in) + 2 Na(+)(in). It carries out the reaction taurohyodeoxycholate(out) + 2 Na(+)(out) = taurohyodeoxycholate(in) + 2 Na(+)(in). It catalyses the reaction taurohyocholate(out) + 2 Na(+)(out) = taurohyocholate(in) + 2 Na(+)(in). The catalysed reaction is tauro-beta-muricholate(out) + 2 Na(+)(out) = tauro-beta-muricholate(in) + 2 Na(+)(in). The transport of bile acids is sodium-dependent. As a major transporter of conjugated bile salts from plasma into the hepatocyte, it plays a key role in the enterohepatic circulation of bile salts necessary for the solubilization and absorption of dietary fat and fat-soluble vitamins. It is strictly dependent on the extracellular presence of sodium. It exhibits broad substrate specificity and transports various bile acids, such as taurocholate, cholate, as well as non-bile acid organic compounds, such as estrone sulfate. Works collaboratively with the ileal transporter (NTCP2), the organic solute transporter (OST), and the bile salt export pump (BSEP), to ensure efficacious biological recycling of bile acids during enterohepatic circulation. Its function is as follows. (Microbial infection) Acts as an entry receptor for hepatitis B virus (HBV). The recognition for human SLC10A1/NTCP is highly specific. The protein is Hepatic sodium/bile acid cotransporter (SLC10A1) of Homo sapiens (Human).